The sequence spans 505 residues: Deoxyguanosinetriphosphate triphosphohydrolase (505 aa).

The HD domain occupies 66 to 273 (RLTHSMEVQQ…MEAADDISYC (208 aa)).

Belongs to the dGTPase family. Type 1 subfamily. As to quaternary structure, homotetramer. Mg(2+) serves as cofactor.

The catalysed reaction is dGTP + H2O = 2'-deoxyguanosine + triphosphate + H(+). Its function is as follows. dGTPase preferentially hydrolyzes dGTP over the other canonical NTPs. The protein is Deoxyguanosinetriphosphate triphosphohydrolase of Salmonella typhimurium (strain LT2 / SGSC1412 / ATCC 700720).